We begin with the raw amino-acid sequence, 402 residues long: Odorant receptor 22c (402 aa).

Residues 1-42 (MTDSGQPAIADHFYRIPRISGLIVGLWPQRIRGGGGRPWHAH) lie on the Cytoplasmic side of the membrane. The chain crosses the membrane as a helical span at residues 43-63 (LLFVFAFAMVVVGAVGEVSYG). The Extracellular portion of the chain corresponds to 64 to 73 (CVHLDNLVVA). The chain crosses the membrane as a helical span at residues 74 to 94 (LEAFCPGTTKAVCVLKLWVFF). The Cytoplasmic portion of the chain corresponds to 95 to 134 (RSNRRWAELVQRLRAILWESRRQEAQRMLVGLATTANRLS). A helical transmembrane segment spans residues 135-155 (LLLLSSGTATNAAFTLQPLIM). Topologically, residues 156-173 (GLYRWIVQLPGQTELPFN) are extracellular. Residues 174–194 (IILPSFAVQPGVFPLTYVLLT) traverse the membrane as a helical segment. The Cytoplasmic portion of the chain corresponds to 195-201 (ASGACTV). A helical transmembrane segment spans residues 202–222 (FAFSFVDGFFICSCLYICGAF). Over 223 to 276 (RLVQQDIRRIFADLHGDSVDVFTEEMNAEVRHRLAQVVERHNAIIDFCTDLTRQ) the chain is Extracellular. A helical transmembrane segment spans residues 277–297 (FTVIVLMHFLSAAFVLCSTIL). Over 298 to 307 (DIMLNTSSLS) the chain is Cytoplasmic. A helical membrane pass occupies residues 308–328 (GLTYICYIIAALTQLFLYCFG). Residues 329-402 (GNHVSESSAA…SYITLLKTFL (74 aa)) are Extracellular-facing.

It belongs to the insect chemoreceptor superfamily. Heteromeric odorant receptor channel (TC 1.A.69) family. Or1a subfamily. Interacts with Orco. Complexes exist early in the endomembrane system in olfactory sensory neurons (OSNs), coupling these complexes to the conserved ciliary trafficking pathway. In terms of tissue distribution, not expressed in either the antenna or maxillary palp.

It localises to the cell membrane. Odorant receptor which mediates acceptance or avoidance behavior, depending on its substrates. The odorant receptor repertoire encodes a large collection of odor stimuli that vary widely in identity, intensity, and duration. May form a complex with Orco to form odorant-sensing units, providing sensitive and prolonged odorant signaling and calcium permeability. This is Odorant receptor 22c (Or22c) from Drosophila melanogaster (Fruit fly).